A 61-amino-acid polypeptide reads, in one-letter code: Large ribosomal subunit protein uL30 (61 aa).

It belongs to the universal ribosomal protein uL30 family. As to quaternary structure, part of the 50S ribosomal subunit.

The polypeptide is Large ribosomal subunit protein uL30 (Rhizorhabdus wittichii (strain DSM 6014 / CCUG 31198 / JCM 15750 / NBRC 105917 / EY 4224 / RW1) (Sphingomonas wittichii)).